A 1542-amino-acid polypeptide reads, in one-letter code: Pleiotropic ABC efflux transporter of multiple drugs PDH1 (1542 aa).

The segment covering 1–14 has biased composition (low complexity); the sequence is MNTPDDSSVSSVDS. A disordered region spans residues 1–61; the sequence is MNTPDDSSVS…APADGSAPLD (61 aa). At 1-517 the chain is on the cytoplasmic side; the sequence is MNTPDDSSVS…LIRNFWRIKN (517 aa). The span at 24–33 shows a compositional bias: basic and acidic residues; the sequence is NVEKRIRELA. Residues 35–47 are compositionally biased toward polar residues; the sequence is SLTQQSLTSSNRS. Positions 153-409 constitute an ABC transporter 1 domain; sequence VKLLNAVWRK…FQKMGYFCPK (257 aa). A run of 6 helical transmembrane segments spans residues 518 to 540, 552 to 574, 603 to 625, 634 to 652, 662 to 684, and 773 to 792; these read SASVTLFQVFGNSAMAFILGSMF, FYFRGAAMFFAILFNAFSSLLEI, VISEIPPKIVTAILFNIIFYFLV, FFFYFLINVIAVFAMSHLF, LQEAMVPASMLLLALSMYTGFAI, and GFGVGMAYVIFFFFVYLILC. Residues 793-1220 lie on the Cytoplasmic side of the membrane; it reads EFNEGAKQKG…LFQQYWRTPD (428 aa). The span at 825–834 shows a compositional bias: basic and acidic residues; the sequence is TKMHTDKNDI. Residues 825-846 are disordered; the sequence is TKMHTDKNDIENNSESITSNAT. Positions 835–846 are enriched in polar residues; it reads ENNSESITSNAT. The 244-residue stretch at 885–1128 folds into the ABC transporter 2 domain; that stretch reads FHWQNLCYDV…MIKYFEDHGA (244 aa). An ATP-binding site is contributed by 921–928; sequence GASGAGKT. 6 consecutive transmembrane segments (helical) span residues 1221–1241, 1256–1276, 1296–1316, 1342–1362, 1370–1390, and 1495–1515; these read YLWSKYILTIFNQLFIGFTFF, SIFMYTVIFNPLLQQYLPTFV, AFILAQIVVEVPWNIVAGTLA, LFWLFSIAFYVYVGSLGLFVI, TAAHIGSLMFTMALSFCGVMA, and GIFICFIVFDYVAGIFLYWLA. At 1516 to 1542 the chain is on the cytoplasmic side; the sequence is RVPKTNGKIAKNGKTAKVNFIRRLIPF.

Belongs to the ABC transporter superfamily. ABCG family. PDR (TC 3.A.1.205) subfamily. Post-translationally, phosphorylated by PKA. Dephosphorylated on glucose depletion and independently rephosphorylated during glucose exposure or under stress.

The protein resides in the cell membrane. In terms of biological role, pleiotropic ABC efflux transporter that confers resistance to structurally and functionally unrelated compounds including caspofungin or azoles such as fluconazole, itraconazole, posaconazole, voriconazole, and isavuconazole. Does not play a role in the azole resistance in mature biofilms. In Candida glabrata (strain ATCC 2001 / BCRC 20586 / JCM 3761 / NBRC 0622 / NRRL Y-65 / CBS 138) (Yeast), this protein is Pleiotropic ABC efflux transporter of multiple drugs PDH1.